We begin with the raw amino-acid sequence, 570 residues long: 2-isopropylmalate synthase (570 aa).

The 275-residue stretch at 31-305 (PIWMSTDLRD…DPELDFSHIN (275 aa)) folds into the Pyruvate carboxyltransferase domain. D40, H244, H246, and N280 together coordinate Mg(2+). Residues 437 to 570 (SDGAIGYVSH…RRSSAQATVA (134 aa)) are regulatory domain.

Belongs to the alpha-IPM synthase/homocitrate synthase family. LeuA type 2 subfamily. Homodimer. Mg(2+) serves as cofactor.

It is found in the cytoplasm. It carries out the reaction 3-methyl-2-oxobutanoate + acetyl-CoA + H2O = (2S)-2-isopropylmalate + CoA + H(+). Its pathway is amino-acid biosynthesis; L-leucine biosynthesis; L-leucine from 3-methyl-2-oxobutanoate: step 1/4. In terms of biological role, catalyzes the condensation of the acetyl group of acetyl-CoA with 3-methyl-2-oxobutanoate (2-ketoisovalerate) to form 3-carboxy-3-hydroxy-4-methylpentanoate (2-isopropylmalate). The protein is 2-isopropylmalate synthase of Ralstonia pickettii (strain 12J).